A 92-amino-acid polypeptide reads, in one-letter code: Small ribosomal subunit protein uS17 (92 aa).

Belongs to the universal ribosomal protein uS17 family. Part of the 30S ribosomal subunit.

One of the primary rRNA binding proteins, it binds specifically to the 5'-end of 16S ribosomal RNA. The polypeptide is Small ribosomal subunit protein uS17 (Cupriavidus pinatubonensis (strain JMP 134 / LMG 1197) (Cupriavidus necator (strain JMP 134))).